The primary structure comprises 210 residues: MTQPIGLDGLPEKASSSGTTYLDGQLLIAMPVMQDERFARSVIYVCAHSPDGAMGIIVNRPAGSIDFPQLLRQLDIVADGVPIQLPDDGETVKILRGGPVETSRGFVLHSSDYAIEDATLPIDNGICLTATLDILKAIAQGTGPRRAVLALGYAGWAPGQLESEIQHNGWLHCPADPDIVFGRDMDDKYQRALQKIGIDLGMLSNSAGHA.

The protein belongs to the UPF0301 (AlgH) family.

The protein is UPF0301 protein OCAR_7326/OCA5_c07920 of Afipia carboxidovorans (strain ATCC 49405 / DSM 1227 / KCTC 32145 / OM5) (Oligotropha carboxidovorans).